A 733-amino-acid chain; its full sequence is MRIPEFDDIELGAGGGPSGSAEQWRAAVKESVGKSESDLLWETPEGIAVKPLYTGADVEGLDFLETYPGVAPYLRGPYPTMYVNQPWTIRQYAGFSTAEESNAFYRRNLAAGQKGLSVAFDLPTHRGYDSDHPRVTGDVGMAGVAIDSIYDMRQLFDGIPLDKMTVSMTMNGAVLPVLALYIVAAEEQGVPPEKLAGTIQNDILKEFMVRNTYIYPPKPSMRIISDIFAYTSQKMPRYNSISISGYHIQEAGATADLELAYTLADGVEYLRAGQEAGLDVDAFAPRLSFFWAIGMNFFMEVAKLRAARLLWAKLVKQFDPKNAKSLSLRTHSQTSGWSLTAQDVFNNVTRTCVEAMAATQGHTQSLHTNALDEALALPTDFSARIARNTQLLIQQESGTTRTIDPWGGSAYVEKLTYDLARRAWQHIEEVEAAGGMAQAIDAGIPKLRVEEAAARTQARIDSGRQPVIGVNKYRVDTDEQIDVLKVDNSSVRAQQIEKLRRLREERDDAACQDALRALTAAAERGPGQGLEGNLLALAVDAARAKATVGEISDALESVYGRHAGQIRTISGVYRTEAGQSPSVERTRALVDAFDEAEGRRPRILVAKMGQDGHDRGQKVIASAFADLGFDVDVGPLFQTPAEVARQAVEADVHIVGVSSLAAGHLTLVPALREELAAEGRDDIMIVVGGVIPPQDVEALHEAGATAVFPPGTVIPDAAHDLVKRLAADLGHEL.

A compositionally biased stretch (acidic residues) spans 1-10 (MRIPEFDDIE). The segment at 1–22 (MRIPEFDDIELGAGGGPSGSAE) is disordered. Positions 78, 81, 88, 90, 92, and 117 each coordinate (R)-methylmalonyl-CoA. Residues Phe-120 and Ala-142 each contribute to the cob(II)alamin site. Positions 198 and 200 each coordinate (R)-methylmalonyl-CoA. Cob(II)alamin-binding residues include Val-209 and Arg-210. 4 residues coordinate (R)-methylmalonyl-CoA: Arg-210, His-247, Arg-286, and Ser-288. Residues Gly-336, Glu-373, Ala-376, Gly-612, His-613, Asp-614, Arg-615, Ser-658, Leu-660, Gly-689, and Thr-712 each contribute to the cob(II)alamin site. The region spanning 600–732 (RPRILVAKMG…KRLAADLGHE (133 aa)) is the B12-binding domain.

It belongs to the methylmalonyl-CoA mutase family. As to quaternary structure, heterodimer of an alpha and a beta chain. Requires adenosylcob(III)alamin as cofactor.

The catalysed reaction is (R)-methylmalonyl-CoA = succinyl-CoA. Functionally, catalyzes the isomerization of succinyl-CoA to methylmalonyl-CoA during synthesis of propionate from tricarboxylic acid-cycle intermediates. This conversion most likely represents an important source of building blocks for polyketide antibiotic biosynthesis. It is unable to catalyze the conversion of isobutyryl-CoA into N-butyryl-CoA. This chain is Methylmalonyl-CoA mutase large subunit (mutB), found in Streptomyces virginiae (Streptomyces cinnamonensis).